We begin with the raw amino-acid sequence, 454 residues long: Bifunctional protein GlmU (454 aa).

Residues 1-226 (MALNVVILAA…AIEVEGANNR (226 aa)) are pyrophosphorylase. Residues 8–11 (LAAG), Lys-22, Gln-73, 78–79 (GT), 100–102 (YGD), Gly-137, Glu-151, Asn-166, and Asn-224 each bind UDP-N-acetyl-alpha-D-glucosamine. Asp-102 provides a ligand contact to Mg(2+). A Mg(2+)-binding site is contributed by Asn-224. A linker region spans residues 227–247 (VQLAQLERAYQAREAEKLMIA). An N-acetyltransferase region spans residues 248–454 (GANLRDPSRI…GWQRPVKIKE (207 aa)). 2 residues coordinate UDP-N-acetyl-alpha-D-glucosamine: Arg-330 and Lys-348. His-360 serves as the catalytic Proton acceptor. Tyr-363 and Asn-374 together coordinate UDP-N-acetyl-alpha-D-glucosamine. Residues Ala-377, 383-384 (NY), Ser-402, Ala-420, and Arg-437 each bind acetyl-CoA.

It in the N-terminal section; belongs to the N-acetylglucosamine-1-phosphate uridyltransferase family. The protein in the C-terminal section; belongs to the transferase hexapeptide repeat family. In terms of assembly, homotrimer. Requires Mg(2+) as cofactor.

The protein localises to the cytoplasm. The catalysed reaction is alpha-D-glucosamine 1-phosphate + acetyl-CoA = N-acetyl-alpha-D-glucosamine 1-phosphate + CoA + H(+). It carries out the reaction N-acetyl-alpha-D-glucosamine 1-phosphate + UTP + H(+) = UDP-N-acetyl-alpha-D-glucosamine + diphosphate. The protein operates within nucleotide-sugar biosynthesis; UDP-N-acetyl-alpha-D-glucosamine biosynthesis; N-acetyl-alpha-D-glucosamine 1-phosphate from alpha-D-glucosamine 6-phosphate (route II): step 2/2. Its pathway is nucleotide-sugar biosynthesis; UDP-N-acetyl-alpha-D-glucosamine biosynthesis; UDP-N-acetyl-alpha-D-glucosamine from N-acetyl-alpha-D-glucosamine 1-phosphate: step 1/1. It functions in the pathway bacterial outer membrane biogenesis; LPS lipid A biosynthesis. Functionally, catalyzes the last two sequential reactions in the de novo biosynthetic pathway for UDP-N-acetylglucosamine (UDP-GlcNAc). The C-terminal domain catalyzes the transfer of acetyl group from acetyl coenzyme A to glucosamine-1-phosphate (GlcN-1-P) to produce N-acetylglucosamine-1-phosphate (GlcNAc-1-P), which is converted into UDP-GlcNAc by the transfer of uridine 5-monophosphate (from uridine 5-triphosphate), a reaction catalyzed by the N-terminal domain. The polypeptide is Bifunctional protein GlmU (Shewanella sp. (strain MR-7)).